Consider the following 530-residue polypeptide: B3 domain-containing protein REM-like 3 (530 aa).

2 DNA-binding regions (TF-B3) span residues 11 to 103 (KPHF…FGLS) and 144 to 241 (DFVV…FPLE). The tract at residues 251–276 (SKKVKQEVEHEESVKEETNVESGKLK) is disordered. A compositionally biased stretch (basic and acidic residues) spans 254 to 276 (VKQEVEHEESVKEETNVESGKLK). 2 DNA-binding regions (TF-B3) span residues 296–393 (NFVV…FPLE) and 431–530 (SFVV…WDKK).

The protein localises to the nucleus. This is B3 domain-containing protein REM-like 3 from Arabidopsis thaliana (Mouse-ear cress).